The following is an 86-amino-acid chain: Small ribosomal subunit protein uS15 (86 aa).

Positions 1-22 (MSVDTQKVIEDNKRSAQDTGSP) are disordered. Residues 7 to 16 (KVIEDNKRSA) are compositionally biased toward basic and acidic residues.

Belongs to the universal ribosomal protein uS15 family. In terms of assembly, part of the 30S ribosomal subunit. Forms a bridge to the 50S subunit in the 70S ribosome, contacting the 23S rRNA.

One of the primary rRNA binding proteins, it binds directly to 16S rRNA where it helps nucleate assembly of the platform of the 30S subunit by binding and bridging several RNA helices of the 16S rRNA. In terms of biological role, forms an intersubunit bridge (bridge B4) with the 23S rRNA of the 50S subunit in the ribosome. This Xanthomonas axonopodis pv. citri (strain 306) protein is Small ribosomal subunit protein uS15.